The following is a 74-amino-acid chain: Acyl carrier protein (74 aa).

One can recognise a Carrier domain in the interval 1–74 (MFEKVRKIIA…DVVEYIKNNS (74 aa)). O-(pantetheine 4'-phosphoryl)serine is present on Ser34.

This sequence belongs to the acyl carrier protein (ACP) family. Post-translationally, 4'-phosphopantetheine is transferred from CoA to a specific serine of apo-ACP by AcpS. This modification is essential for activity because fatty acids are bound in thioester linkage to the sulfhydryl of the prosthetic group.

The protein resides in the cytoplasm. The protein operates within lipid metabolism; fatty acid biosynthesis. Its function is as follows. Carrier of the growing fatty acid chain in fatty acid biosynthesis. In Acetivibrio thermocellus (strain ATCC 27405 / DSM 1237 / JCM 9322 / NBRC 103400 / NCIMB 10682 / NRRL B-4536 / VPI 7372) (Clostridium thermocellum), this protein is Acyl carrier protein.